The following is a 386-amino-acid chain: L-olivosyl-oleandolide 3-O-methyltransferase (386 aa).

S-adenosyl-L-methionine is bound by residues S166, 195–201 (EIGIGGY), S210, D227, 245–246 (RQ), and D268. D268 is a binding site for Mg(2+). H271 acts as the Proton acceptor in catalysis. 2 residues coordinate Mg(2+): E296 and D297. A disordered region spans residues 364 to 386 (RRAINKEGGIPHTVPREPFWNDN).

Belongs to the methyltransferase OleY/MycE family. As to quaternary structure, homodimer. Requires Mg(2+) as cofactor.

The enzyme catalyses L-olivosyl-oleandolide + S-adenosyl-L-methionine = L-oleandrosyl-oleandolide + S-adenosyl-L-homocysteine + H(+). Its pathway is antibiotic biosynthesis. Functionally, 3-O-methyltransferase involved in the synthesis of L-oleandrose, a sugar attached to oleandomycin, a macrolide antibiotic. Acts on monoglycosylated macrolactones and mediates the conversion of L-olivosyl-erythronolide B into its 3-O-methylated derivative, L-oleandrosyl-erythronolide B. Also able to methylate other monoglycosylated derivatives, such as L-rhamnosyl- and L-mycarosyl-erythronolide B. This is L-olivosyl-oleandolide 3-O-methyltransferase (oleY) from Streptomyces antibioticus.